A 314-amino-acid chain; its full sequence is BTB/POZ domain-containing adapter for CUL3-mediated RhoA degradation protein 2 (314 aa).

The 69-residue stretch at 32–100 (KYVRLNVGGS…LRDDTIALPK (69 aa)) folds into the BTB domain.

This sequence belongs to the BACURD family. As to quaternary structure, component of the BCR(TNFAIP1) E3 ubiquitin ligase complex, at least composed of CUL3, TNFAIP1/BACURD2 and RBX1.

Its subcellular location is the cytoplasm. The protein localises to the nucleus. The protein resides in the endosome. The protein operates within protein modification; protein ubiquitination. Functionally, substrate-specific adapter of a BCR (BTB-CUL3-RBX1) E3 ubiquitin-protein ligase complex involved in regulation of cytoskeleton structure. The BCR(TNFAIP1) E3 ubiquitin ligase complex mediates the ubiquitination of target proteins, leading to their degradation by the proteasome. This is BTB/POZ domain-containing adapter for CUL3-mediated RhoA degradation protein 2 (TNFAIP1) from Gallus gallus (Chicken).